We begin with the raw amino-acid sequence, 74 residues long: uncharacterized protein (74 aa).

Residues 29-63 are a coiled coil; it reads LNSKKSALQKDKELQQQAKAQESALAGEELRRRAL.

This is an uncharacterized protein from Pseudoalteromonas phage PM2 (Bacteriophage PM2).